Reading from the N-terminus, the 191-residue chain is Probable molybdenum cofactor guanylyltransferase (191 aa).

GTP contacts are provided by residues 6–8 (LAG), K18, D67, and D92. A Mg(2+)-binding site is contributed by D92.

This sequence belongs to the MobA family. The cofactor is Mg(2+).

The protein resides in the cytoplasm. The catalysed reaction is Mo-molybdopterin + GTP + H(+) = Mo-molybdopterin guanine dinucleotide + diphosphate. Transfers a GMP moiety from GTP to Mo-molybdopterin (Mo-MPT) cofactor (Moco or molybdenum cofactor) to form Mo-molybdopterin guanine dinucleotide (Mo-MGD) cofactor. In Thermococcus gammatolerans (strain DSM 15229 / JCM 11827 / EJ3), this protein is Probable molybdenum cofactor guanylyltransferase.